The sequence spans 261 residues: MMNQTYTAVLADDEPLLRHHLNKLLAELWPALEIVASAENGQIALQAIEQHQPDVVFLDIRMPKMDGIEVARRLLQQPKVPLVVFITAYDEYAVSAFETHAIDYLLKPLSSSRLASCCEKLQQQLRRNVAPSNDLAQLMSQFEQLTRTVKPQYQVWLKASKGEEIHLIAVNELLYVKAEDKYLSLYKVHGATTHEYLLRSSLKELLAQLDPNQFWQIHRSIVVNVGKIDKVTRDFGGKMWVHIDRLQLPVSRALQHLFKVS.

The Response regulatory domain occupies Thr7–Gln122. The residue at position 54 (Asp54) is a 4-aspartylphosphate. The HTH LytTR-type domain occupies Leu157–Ser261.

This is an uncharacterized protein from Vibrio cholerae serotype O1 (strain ATCC 39315 / El Tor Inaba N16961).